The sequence spans 118 residues: Na(+)/H(+) antiporter subunit G1 (118 aa).

Transmembrane regions (helical) follow at residues 9-29, 47-67, and 69-89; these read VSIIFVVLGALISAFAATGLI, LGAMFLLFGAFLYFIGTEGYV, and MQLIIGIIFVFITGPLSSHLI.

It belongs to the CPA3 antiporters (TC 2.A.63) subunit G family. In terms of assembly, may form a heterooligomeric complex that consists of seven subunits: mnhA1, mnhB1, mnhC1, mnhD1, mnhE1, mnhF1 and mnhG1.

The protein resides in the cell membrane. In terms of biological role, mnh complex is a Na(+)/H(+) antiporter involved in Na(+) excretion. This chain is Na(+)/H(+) antiporter subunit G1 (mnhG1), found in Staphylococcus epidermidis (strain ATCC 35984 / DSM 28319 / BCRC 17069 / CCUG 31568 / BM 3577 / RP62A).